The sequence spans 445 residues: Phosphoglucosamine mutase (445 aa).

Serine 102 acts as the Phosphoserine intermediate in catalysis. Positions 102, 241, 243, and 245 each coordinate Mg(2+). Phosphoserine is present on serine 102.

It belongs to the phosphohexose mutase family. Mg(2+) is required as a cofactor. In terms of processing, activated by phosphorylation.

The enzyme catalyses alpha-D-glucosamine 1-phosphate = D-glucosamine 6-phosphate. In terms of biological role, catalyzes the conversion of glucosamine-6-phosphate to glucosamine-1-phosphate. This chain is Phosphoglucosamine mutase, found in Shewanella oneidensis (strain ATCC 700550 / JCM 31522 / CIP 106686 / LMG 19005 / NCIMB 14063 / MR-1).